The sequence spans 87 residues: Small ribosomal subunit protein bS20 (87 aa).

It belongs to the bacterial ribosomal protein bS20 family.

Binds directly to 16S ribosomal RNA. The protein is Small ribosomal subunit protein bS20 of Rickettsia bellii (strain OSU 85-389).